A 279-amino-acid chain; its full sequence is Orotidine 5'-phosphate decarboxylase (279 aa).

Substrate-binding positions include Asp-8, Lys-30, 58–67 (DLKFHDIPNT), Thr-117, Arg-177, Gln-186, Gly-206, and Arg-207. Lys-60 acts as the Proton donor in catalysis.

This sequence belongs to the OMP decarboxylase family. Type 1 subfamily. As to quaternary structure, homodimer.

It carries out the reaction orotidine 5'-phosphate + H(+) = UMP + CO2. The protein operates within pyrimidine metabolism; UMP biosynthesis via de novo pathway; UMP from orotate: step 2/2. Functionally, catalyzes the decarboxylation of orotidine 5'-monophosphate (OMP) to uridine 5'-monophosphate (UMP). The chain is Orotidine 5'-phosphate decarboxylase from Campylobacter jejuni subsp. jejuni serotype O:2 (strain ATCC 700819 / NCTC 11168).